The chain runs to 200 residues: Adenylate kinase (200 aa).

10–15 (GAGKGT) is an ATP binding site. The NMP stretch occupies residues 30–59 (STGDMLRAAVAAETPVGLEAKAIMESGGLV). Residues threonine 31, arginine 36, 57–59 (GLV), 85–88 (GFPR), and glutamine 92 each bind AMP. The LID stretch occupies residues 126–142 (KRAEETAARGQPVRKDD). Position 127 (arginine 127) interacts with ATP. Residues arginine 139 and arginine 150 each coordinate AMP. Residue lysine 178 participates in ATP binding.

The protein belongs to the adenylate kinase family. In terms of assembly, monomer.

The protein resides in the cytoplasm. It catalyses the reaction AMP + ATP = 2 ADP. The protein operates within purine metabolism; AMP biosynthesis via salvage pathway; AMP from ADP: step 1/1. Catalyzes the reversible transfer of the terminal phosphate group between ATP and AMP. Plays an important role in cellular energy homeostasis and in adenine nucleotide metabolism. In Methylorubrum extorquens (strain CM4 / NCIMB 13688) (Methylobacterium extorquens), this protein is Adenylate kinase.